The chain runs to 173 residues: NADH-ubiquinone oxidoreductase chain 6 (173 aa).

The next 5 helical transmembrane spans lie at 1 to 21 (MTYFVVFLGLCFVLGGLAVAS), 27 to 47 (YGVVGLVLASVVGCGWLLSLG), 48 to 68 (VSFVSLVLFMVYLGGMLVVFV), 87 to 107 (VVGYGASFVVVLMVGGVIGGF), and 139 to 159 (CGVGMFLVAGWGLVLTLFVVL).

It belongs to the complex I subunit 6 family.

It is found in the mitochondrion membrane. The catalysed reaction is a ubiquinone + NADH + 5 H(+)(in) = a ubiquinol + NAD(+) + 4 H(+)(out). Core subunit of the mitochondrial membrane respiratory chain NADH dehydrogenase (Complex I) that is believed to belong to the minimal assembly required for catalysis. Complex I functions in the transfer of electrons from NADH to the respiratory chain. The immediate electron acceptor for the enzyme is believed to be ubiquinone. The protein is NADH-ubiquinone oxidoreductase chain 6 (MT-ND6) of Cepphus columba (Pigeon guillemot).